We begin with the raw amino-acid sequence, 127 residues long: Ribosome-binding factor A (127 aa).

It belongs to the RbfA family. Monomer. Binds 30S ribosomal subunits, but not 50S ribosomal subunits or 70S ribosomes.

Its subcellular location is the cytoplasm. One of several proteins that assist in the late maturation steps of the functional core of the 30S ribosomal subunit. Associates with free 30S ribosomal subunits (but not with 30S subunits that are part of 70S ribosomes or polysomes). Required for efficient processing of 16S rRNA. May interact with the 5'-terminal helix region of 16S rRNA. This Aromatoleum aromaticum (strain DSM 19018 / LMG 30748 / EbN1) (Azoarcus sp. (strain EbN1)) protein is Ribosome-binding factor A.